The following is a 477-amino-acid chain: P3 protein (477 aa).

A disordered region spans residues 1-21 (MVLMQDKGSSQQWPGLGGEGG). 8 helical membrane passes run 225–245 (PMLL…FLMA), 253–273 (ALAL…SYLF), 281–301 (VTLA…FLPL), 320–340 (ISKI…GVLI), 361–381 (VLLL…LAGI), 383–403 (LPIV…GYCL), 417–437 (VSIE…QLSL), and 450–470 (FIVA…HFIY).

The protein belongs to the bile acid:sodium symporter (BASS) (TC 2.A.28) family.

Its subcellular location is the membrane. Functionally, the ubiquitous expression and the conservation of the sequence in distant animal species suggest that the gene codes for a protein with housekeeping functions. The protein is P3 protein (SLC10A3) of Homo sapiens (Human).